We begin with the raw amino-acid sequence, 295 residues long: Diaminopimelate epimerase (295 aa).

Residues Asn13, Gln46, and Asn66 each coordinate substrate. Residue Cys75 is the Proton donor of the active site. Substrate is bound by residues Gly76–Asn77, Asn162, Asn195, and Glu213–Arg214. Cys222 serves as the catalytic Proton acceptor. Gly223–Thr224 provides a ligand contact to substrate.

The protein belongs to the diaminopimelate epimerase family. In terms of assembly, homodimer.

It is found in the cytoplasm. The enzyme catalyses (2S,6S)-2,6-diaminopimelate = meso-2,6-diaminopimelate. It participates in amino-acid biosynthesis; L-lysine biosynthesis via DAP pathway; DL-2,6-diaminopimelate from LL-2,6-diaminopimelate: step 1/1. Functionally, catalyzes the stereoinversion of LL-2,6-diaminopimelate (L,L-DAP) to meso-diaminopimelate (meso-DAP), a precursor of L-lysine and an essential component of the bacterial peptidoglycan. This is Diaminopimelate epimerase from Psychrobacter arcticus (strain DSM 17307 / VKM B-2377 / 273-4).